A 169-amino-acid polypeptide reads, in one-letter code: Protein UL138 (169 aa).

The chain crosses the membrane as a helical span at residues 8–28; the sequence is VGLPIIGVMLVLIVAILCYLA. Residues 109–133 form a disordered region; sequence DRRAGSSSSSSVHVANQRNSVPPPD.

As to quaternary structure, interacts with host TNFR1. Interacts with host MRP1. Interacts with host UAF1/WDR48. Interacts with host STING1.

It localises to the host Golgi apparatus membrane. In terms of biological role, plays an important role in the establishment of latent viral infection. Modulates the expression of several host cell surface receptors such as TNFR1, CD36 or the MRP1 transporter during productive infection. For instance, associates with host MRP1 and induces its lysosomal degradation. Plays an inhibitory role in the host cGAS/STING/TBK1 pathway and upstream of IRF3 phosphorylation and NF-kappa-B leading to inhibition of interferon beta production during both lytic and latent infections. Also participates in the establishment of latency by sustaining an innate immune response through phosphorylation and activation of host STAT1. The polypeptide is Protein UL138 (UL138) (Human cytomegalovirus (strain Merlin) (HHV-5)).